We begin with the raw amino-acid sequence, 422 residues long: Carboxypeptidase B2 (422 aa).

A signal peptide spans 1–21 (MKLYGLGVLVAIILYEKHGLA). A propeptide spans 22 to 113 (FQSGHVLSAL…QTSNDTVSPR (92 aa)) (activation peptide). Residues Asn-43, Asn-72, Asn-84, and Asn-107 are each glycosylated (N-linked (GlcNAc...) asparagine). A Peptidase M14 domain is found at 121–418 (QYHSLNEIYS…AAVSKIAWHV (298 aa)). Cysteines 177 and 190 form a disulfide. Residues His-180 and Glu-183 each contribute to the Zn(2+) site. Residues 180-183 (HARE) and Arg-238 contribute to the substrate site. N-linked (GlcNAc...) asparagine glycosylation is present at Asn-240. 2 cysteine pairs are disulfide-bonded: Cys-249–Cys-273 and Cys-264–Cys-278. Residue 255 to 256 (NR) participates in substrate binding. Zn(2+) is bound at residue His-309. Residue 310 to 311 (SY) participates in substrate binding. The N-linked (GlcNAc...) asparagine glycan is linked to Asn-322. Tyr-362 is a substrate binding site. The Proton donor/acceptor role is filled by Glu-384.

This sequence belongs to the peptidase M14 family. Zn(2+) serves as cofactor. In terms of tissue distribution, plasma; synthesized in the liver.

It is found in the secreted. It catalyses the reaction Release of C-terminal Arg and Lys from a polypeptide.. With respect to regulation, TAFI/CPB2 is unique among carboxypeptidases in that it spontaneously inactivates with a short half-life, a property that is crucial for its role in controlling blood clot lysis. The zymogen is stabilized by interactions with the activation peptide. Release of the activation peptide increases a dynamic flap mobility and in time this leads to conformational changes that disrupt the catalytic site and expose a cryptic thrombin-cleavage site present at Arg-323. In terms of biological role, cleaves C-terminal arginine or lysine residues from biologically active peptides such as kinins or anaphylatoxins in the circulation thereby regulating their activities. Down-regulates fibrinolysis by removing C-terminal lysine residues from fibrin that has already been partially degraded by plasmin. In Rattus norvegicus (Rat), this protein is Carboxypeptidase B2 (Cpb2).